A 95-amino-acid chain; its full sequence is Costars family protein At4g33640 (95 aa).

M1 is modified (N-acetylmethionine).

Belongs to the costars family.

This Arabidopsis thaliana (Mouse-ear cress) protein is Costars family protein At4g33640.